The sequence spans 415 residues: 2-oxoadipate dioxygenase/decarboxylase (415 aa).

3 residues coordinate 2-oxoadipate: His-66, Arg-70, and His-225. His-66 lines the Fe(2+) pocket. Residues His-225 and Glu-296 each coordinate Fe(2+). Residue Ala-361 coordinates 2-oxoadipate.

Belongs to the 2-oxoadipate dioxygenase/decarboxylase family. It depends on Fe(2+) as a cofactor.

It carries out the reaction 2-oxoadipate + O2 = (R)-2-hydroxyglutarate + CO2. Functionally, catalyzes the decarboxylation and hydroxylation of 2-oxoadipate (2OA) to form D-2-hydroxyglutarate (D-2-HGA). The chain is 2-oxoadipate dioxygenase/decarboxylase from Mycobacterium bovis (strain ATCC BAA-935 / AF2122/97).